The following is a 206-amino-acid chain: Imidazoleglycerol-phosphate dehydratase (206 aa).

Belongs to the imidazoleglycerol-phosphate dehydratase family.

It is found in the cytoplasm. It carries out the reaction D-erythro-1-(imidazol-4-yl)glycerol 3-phosphate = 3-(imidazol-4-yl)-2-oxopropyl phosphate + H2O. The protein operates within amino-acid biosynthesis; L-histidine biosynthesis; L-histidine from 5-phospho-alpha-D-ribose 1-diphosphate: step 6/9. The protein is Imidazoleglycerol-phosphate dehydratase of Synechococcus sp. (strain JA-3-3Ab) (Cyanobacteria bacterium Yellowstone A-Prime).